Consider the following 504-residue polypeptide: 2,3-bisphosphoglycerate-independent phosphoglycerate mutase (504 aa).

2 residues coordinate Mn(2+): Asp-13 and Ser-63. Ser-63 serves as the catalytic Phosphoserine intermediate. Substrate-binding positions include His-124, 153 to 154 (RD), Arg-183, Arg-189, 254 to 257 (RADR), and Lys-330. Mn(2+) is bound by residues Asp-397, His-401, Asp-438, His-439, and His-457.

The protein belongs to the BPG-independent phosphoglycerate mutase family. In terms of assembly, monomer. Mn(2+) is required as a cofactor.

The enzyme catalyses (2R)-2-phosphoglycerate = (2R)-3-phosphoglycerate. The protein operates within carbohydrate degradation; glycolysis; pyruvate from D-glyceraldehyde 3-phosphate: step 3/5. Functionally, catalyzes the interconversion of 2-phosphoglycerate and 3-phosphoglycerate. This chain is 2,3-bisphosphoglycerate-independent phosphoglycerate mutase, found in Rhodopseudomonas palustris (strain ATCC BAA-98 / CGA009).